The primary structure comprises 262 residues: Oxidoreductase AgnL4 (262 aa).

It belongs to the avfA family.

It participates in secondary metabolite biosynthesis. Its function is as follows. Oxidoreductase; part of the gene cluster that mediates the biosynthesis of agnestins, dihydroxy-xanthone metabolites. The pathway begins with the assembly and cyclization of atrochrysone thioester by the non-reducing polyketide synthase Agnpks1. The atrochrysone carboxyl ACP thioesterase AgnL7 then breaks the thioester bond and releases the atrochrysone carboxylic acid as the first enzyme-free intermediate. The decarboxylase AgnL1 then catalyzes the concerted decarboxylation-elimination required to convert atochrysone carboxylic acid into emodin anthrone, which is further oxidized to emodin by the anthrone oxygenase AgnL2. Emodin then undergoes reduction catalyzed by the oxidoreductase AgnL4 to yield the dihydroquinone tautomer which is the substrate for reduction by the short chain dehydrogenase AgnL6 reduction to produce hydroxyketone, followed by AgnL8 dehydration and likely spontaneous autoxidation to chrysophanol. Baeyer-Villiger oxidation by the oxidase AgnL3 leads to monodictyphenone via cleavage of the C-10/C-10a bond of chrysophanol. Alternative cleavage at the C-4a/C-10 bond of chrysophanol also leads to the formation some cephalone F. Further conversion to agnestins A and B, requires reduction to dihydro-monodictyphenone, oxidation to agnestin C probably via an epoxide, and rearrangement to either agnestin A or agnestin B directly, although agnestin A or agnestin B can also interconvert. Within the cluster, AgnR1 is the only unassigned oxidoreductase present which could be involved in this conversion. However, AgnR1 seems not to be involved in this step, and thus genes involved in the proposed oxidation/reduction may be located elsewhere on the genome. Further agnestin A derivatives are probably formed by spontaneous decarboxylations, dehydrations and methanolysis reactions. The chain is Oxidoreductase AgnL4 from Paecilomyces divaricatus (Penicillium divaricatum).